We begin with the raw amino-acid sequence, 255 residues long: MFKIGNLELQSRLLLGTGKFENEEVQSKAIEASETNVLTFAVRRMNLYDRNLPNPLANVNLKDFITFPNTAGAKTAQEAIRIAEIANHAGVCDMIKVEVIGDDETLLPDPFETYEACKVLLEKGYTVCPYISNDLVLAQRLEELGVHAVMPLASPIGTGRGINNPLNLSYIIENASVPVIVDAGIGSPKDACHAMELGADGILLNTAISAAKDPVKMAEAMKLGINAGRLSYEAGRIPVKYTAQASSPSEGLGFL.

Lysine 96 acts as the Schiff-base intermediate with DXP in catalysis. 1-deoxy-D-xylulose 5-phosphate-binding positions include glycine 157, 183–184, and 205–206; these read AG and NT.

Belongs to the ThiG family. As to quaternary structure, homotetramer. Forms heterodimers with either ThiH or ThiS.

Its subcellular location is the cytoplasm. It carries out the reaction [ThiS sulfur-carrier protein]-C-terminal-Gly-aminoethanethioate + 2-iminoacetate + 1-deoxy-D-xylulose 5-phosphate = [ThiS sulfur-carrier protein]-C-terminal Gly-Gly + 2-[(2R,5Z)-2-carboxy-4-methylthiazol-5(2H)-ylidene]ethyl phosphate + 2 H2O + H(+). It participates in cofactor biosynthesis; thiamine diphosphate biosynthesis. Its function is as follows. Catalyzes the rearrangement of 1-deoxy-D-xylulose 5-phosphate (DXP) to produce the thiazole phosphate moiety of thiamine. Sulfur is provided by the thiocarboxylate moiety of the carrier protein ThiS. In vitro, sulfur can be provided by H(2)S. The sequence is that of Thiazole synthase from Staphylococcus epidermidis (strain ATCC 12228 / FDA PCI 1200).